The sequence spans 155 residues: Transcriptional repressor NrdR (155 aa).

A zinc finger lies at 3–34; that stretch reads CPFCHAEETKVVDSRLVADGAQVRRRRECLEC. An ATP-cone domain is found at 49–139; the sequence is PLIIKRDGRR…VYKRFKDVSD (91 aa).

This sequence belongs to the NrdR family. It depends on Zn(2+) as a cofactor.

Functionally, negatively regulates transcription of bacterial ribonucleotide reductase nrd genes and operons by binding to NrdR-boxes. The polypeptide is Transcriptional repressor NrdR (Legionella pneumophila (strain Paris)).